Consider the following 431-residue polypeptide: Growth-regulating factor 9 (431 aa).

A QLQ domain is found at 24–59; the sequence is WMKAAQLMEFRMQALVYRYIEAGLRVPHHLVVPIWN. 2 consecutive WRC domains span residues 89-133 and 307-351; these read ETEP…LVES and DNEP…VDTT. Short sequence motifs (bipartite nuclear localization signal) lie at residues 94–104, 122–129, 312–322, and 340–345; these read RCRRTDGKKWR, RGRKRSRK, and RGMKKK.

This sequence belongs to the GRF family. Interacts with GIF1. Detected in the shoot apical meristem (SAM) and in young leaf primordium.

The protein localises to the nucleus. Functionally, transcription activator that plays a role in the regulation of cell expansion in leaf and cotyledons tissues. Component of a network formed by miR396, the GRFs and their interacting factors (GIFs) acting in the regulation of meristem function, at least partially through the control of cell proliferation. The polypeptide is Growth-regulating factor 9 (GRF9) (Arabidopsis thaliana (Mouse-ear cress)).